The primary structure comprises 322 residues: Gluconeogenesis factor (322 aa).

It belongs to the gluconeogenesis factor family.

The protein localises to the cytoplasm. Its function is as follows. Required for morphogenesis under gluconeogenic growth conditions. The protein is Gluconeogenesis factor of Listeria monocytogenes serovar 1/2a (strain ATCC BAA-679 / EGD-e).